We begin with the raw amino-acid sequence, 858 residues long: Large structural phosphoprotein (858 aa).

The disordered stretch occupies residues 603–629 (DVSRGGKGNSRDLYSGGNAEKKETSGK).

Belongs to the herpesviridae large structural phosphoprotein family. Homotetramer. Interacts with the major capsid protein. 180 tegument protein pU11 tetramers bind to the virion capsid. Post-translationally, phosphorylated at multiple sites.

Its subcellular location is the virion tegument. The sequence is that of Large structural phosphoprotein (U11) from Homo sapiens (Human).